The following is a 4538-amino-acid chain: Polyketide synthase PksL (4538 aa).

Residues M1–I123 are N-terminal hotdog fold 1. The region spanning M1–I285 is the PKS/mFAS DH 1 domain. H26 (proton acceptor; for dehydratase activity 1) is an active-site residue. Residues Q138 to I285 are C-terminal hotdog fold 1. D199 (proton donor; for dehydratase activity 1) is an active-site residue. The tract at residues H289–S314 is disordered. The Carrier 1 domain occupies S320 to Y394. The residue at position 354 (S354) is an O-(pantetheine 4'-phosphoryl)serine. Residues A433–E871 form the Ketosynthase family 3 (KS3) 1 domain. Residues C609, H744, and H784 each act as for beta-ketoacyl synthase 1 activity in the active site. The dehydratase stretch occupies residues H1048–V1226. The segment at H1051–E1175 is N-terminal hotdog fold 2. Positions H1051 to G1340 constitute a PKS/mFAS DH 2 domain. The active-site Proton acceptor; for dehydratase activity 2 is H1080. The interval N1189–G1340 is C-terminal hotdog fold 2. D1251 functions as the Proton donor; for dehydratase activity 2 in the catalytic mechanism. A beta-ketoacyl reductase 1 region spans residues K1520–A1713. One can recognise a Carrier 2 domain in the interval E1800 to R1873. O-(pantetheine 4'-phosphoryl)serine is present on S1834. Residues T1926–E2365 enclose the Ketosynthase family 3 (KS3) 2 domain. Residues C2103, H2238, and H2278 each act as for beta-ketoacyl synthase 2 activity in the active site. The tract at residues T2546–G2568 is disordered. 2 consecutive Carrier domains span residues I2597–L2674 and V2738–L2815. An O-(pantetheine 4'-phosphoryl)serine mark is found at S2634 and S2775. Residues S2828 to H2854 are disordered. Residues E2873–E3294 enclose the Ketosynthase family 3 (KS3) 3 domain. Catalysis depends on for beta-ketoacyl synthase 3 activity residues C3040, H3175, and H3215. The beta-ketoacyl reductase 2 stretch occupies residues D3686 to E3887. The region spanning N3960 to Y4037 is the Carrier 5 domain. An O-(pantetheine 4'-phosphoryl)serine modification is found at S3997. One can recognise a Ketosynthase family 3 (KS3) 4 domain in the interval A4082–G4485. C4237 (for beta-ketoacyl synthase 4 activity) is an active-site residue.

The cofactor is pantetheine 4'-phosphate.

The protein resides in the cytoplasm. The protein operates within antibiotic biosynthesis; bacillaene biosynthesis. Functionally, involved in some intermediate steps for the synthesis of the antibiotic polyketide bacillaene which is involved in secondary metabolism. This Bacillus subtilis (strain 168) protein is Polyketide synthase PksL (pksL).